Consider the following 261-residue polypeptide: Global transcriptional regulator CodY (261 aa).

The segment at 1 to 159 (MANLLSKTRR…SSTVVGIQLL (159 aa)) is GAF domain. Residues 207 to 226 (ASVIADRIGITRSVIVNALR) constitute a DNA-binding region (H-T-H motif).

It belongs to the CodY family.

It is found in the cytoplasm. In terms of biological role, DNA-binding global transcriptional regulator which is involved in the adaptive response to starvation and acts by directly or indirectly controlling the expression of numerous genes in response to nutrient availability. During rapid exponential growth, CodY is highly active and represses genes whose products allow adaptation to nutrient depletion. The sequence is that of Global transcriptional regulator CodY from Streptococcus mutans serotype c (strain ATCC 700610 / UA159).